A 103-amino-acid polypeptide reads, in one-letter code: Cobalt transport protein CbiN (103 aa).

Helical transmembrane passes span 6–26 (VLTN…PFFV) and 68–88 (LLFA…LGYL).

Belongs to the CbiN family. As to quaternary structure, forms an energy-coupling factor (ECF) transporter complex composed of an ATP-binding protein (A component, CbiO), a transmembrane protein (T component, CbiQ) and 2 possible substrate-capture proteins (S components, CbiM and CbiN) of unknown stoichimetry.

Its subcellular location is the cell membrane. The protein operates within cofactor biosynthesis; adenosylcobalamin biosynthesis. Functionally, part of the energy-coupling factor (ECF) transporter complex CbiMNOQ involved in cobalt import. In Clostridium perfringens (strain 13 / Type A), this protein is Cobalt transport protein CbiN.